Reading from the N-terminus, the 391-residue chain is GTPase Obg (391 aa).

The Obg domain occupies 1–159; sequence MKFIDEALIR…RDLLLELMLL (159 aa). The 174-residue stretch at 160 to 333 folds into the OBG-type G domain; the sequence is ADVGMLGLPN…LTRDIMDFIE (174 aa). GTP contacts are provided by residues 166–173, 191–195, 213–216, 283–286, and 314–316; these read GLPNAGKS, FTTLV, DIPG, NKID, and SAA. Residues Ser173 and Thr193 each coordinate Mg(2+).

Belongs to the TRAFAC class OBG-HflX-like GTPase superfamily. OBG GTPase family. Monomer. Requires Mg(2+) as cofactor.

It is found in the cytoplasm. An essential GTPase which binds GTP, GDP and possibly (p)ppGpp with moderate affinity, with high nucleotide exchange rates and a fairly low GTP hydrolysis rate. Plays a role in control of the cell cycle, stress response, ribosome biogenesis and in those bacteria that undergo differentiation, in morphogenesis control. This is GTPase Obg from Actinobacillus pleuropneumoniae serotype 5b (strain L20).